We begin with the raw amino-acid sequence, 888 residues long: ETO1-like protein 1 (888 aa).

One can recognise a BTB domain in the interval 180–280 (KNVVFKIGEE…ACDRELASLI (101 aa)). 5 TPR repeats span residues 381–414 (VLGF…GHVY), 441–477 (SSVS…DPTL), 511–544 (LECL…CPDY), 637–670 (HERL…KRSF), and 711–744 (GQAL…RHTR). The stretch at 755-793 (LRNDKAAAYEEMTRLIEKAQNNASAYEKRSEYCDRELAK) forms a coiled coil. 2 TPR repeats span residues 807–840 (VYPY…KADL) and 842–873 (LLHL…DPNH).

Belongs to the ETO1 family. Interacts with the C-terminal domain of ACS4, ACS5 and ACS9. In terms of tissue distribution, predominantly expressed in flowers.

Its pathway is protein modification; protein ubiquitination. Its function is as follows. Possible regulator of the ethylene pathway, which acts by regulating the stability of 1-aminocyclopropane-1-carboxylate synthase (ACS) enzymes. May act as a substrate-specific adapter that connects ACS enzymes, such as ACS5, to ubiquitin ligase complexes, leading to proteasomal degradation of ACS enzymes. The chain is ETO1-like protein 1 (EOL1) from Arabidopsis thaliana (Mouse-ear cress).